The chain runs to 1014 residues: Probable LRR receptor-like serine/threonine-protein kinase At1g07650 (1014 aa).

The signal sequence occupies residues 1 to 23; sequence MIYLHRIYFIIVLFTLIFHGRLG. Residues 24–619 lie on the Extracellular side of the membrane; sequence FSDNNKLHEA…KPPVYYDTKD (596 aa). Asn76, Asn87, and Asn101 each carry an N-linked (GlcNAc...) asparagine glycan. 11 LRR repeats span residues 89-112, 113-137, 139-160, 161-184, 186-207, 208-234, 256-279, 280-304, 305-327, 329-352, and 354-376; these read SCHVIRIALKSQNLTGIVPPEFSK, LRHLKVLDLSRNSLTGSIPKEWASM, LEDLSFMGNRLSGPFPKVLTRL, TMLRNLSLEGNQFSGPIPPDIGQL, HLEKLHLPSNAFTGPLTEKLGL, LKNLTDMRISDNNFTGPIPDFISNWTR, LTSLTDLRISDLGGKPSSFPPLKN, LESIKTLILRKCKIIGPIPKYIGDL, KKLKTLDLSFNLLSGEIPSSFEN, KKADFIYLTGNKLTGGVPNYFVER, and KNVDVSFNNFTDESSIPSHDCNR. An N-linked (GlcNAc...) asparagine glycan is attached at Asn165. 3 N-linked (GlcNAc...) asparagine glycosylation sites follow: Asn210, Asn220, and Asn231. Residues Asn362, Asn389, Asn474, Asn481, and Asn511 are each glycosylated (N-linked (GlcNAc...) asparagine). The LRR 12 repeat unit spans residues 516 to 539; the sequence is LHFAEIIFTDDNTLYSLGKRLFDI. Asn570 is a glycosylation site (N-linked (GlcNAc...) asparagine). Residues 620–640 traverse the membrane as a helical segment; it reads IILKVGVPVAAATLLLFIIVG. Topologically, residues 641-1014 are cytoplasmic; the sequence is VFWKKRRDKN…DAEEKTGLLD (374 aa). Thr667 bears the Phosphothreonine mark. The Protein kinase domain occupies 678–960; sequence FDVTRKIGEG…EGKTAMQELL (283 aa). Residues 684–692 and Lys706 each bind ATP; that span reads IGEGGFGSV. A Phosphotyrosine modification is found at Tyr751. Asp805 (proton acceptor) is an active-site residue. 2 positions are modified to phosphoserine: Ser809 and Ser838. Residues Thr839 and Thr844 each carry the phosphothreonine modification. Tyr852 carries the post-translational modification Phosphotyrosine. At Ser989 the chain carries Phosphoserine. Residues 989-1002 are compositionally biased toward polar residues; that stretch reads SFSTSGPRTASANS. The disordered stretch occupies residues 989 to 1014; the sequence is SFSTSGPRTASANSLVDAEEKTGLLD.

It belongs to the protein kinase superfamily. Ser/Thr protein kinase family.

Its subcellular location is the membrane. It catalyses the reaction L-seryl-[protein] + ATP = O-phospho-L-seryl-[protein] + ADP + H(+). The catalysed reaction is L-threonyl-[protein] + ATP = O-phospho-L-threonyl-[protein] + ADP + H(+). In Arabidopsis thaliana (Mouse-ear cress), this protein is Probable LRR receptor-like serine/threonine-protein kinase At1g07650.